The following is a 324-amino-acid chain: tRNA (cytidine(32)/guanosine(34)-2'-O)-methyltransferase (324 aa).

Residues glycine 53, tryptophan 55, aspartate 75, aspartate 91, and aspartate 116 each coordinate S-adenosyl-L-methionine. The Proton acceptor role is filled by lysine 156. The interval 221 to 240 is required for binding to WDR6; the sequence is DFNQLDGPTRVIVPFVACGD.

It belongs to the class I-like SAM-binding methyltransferase superfamily. RNA methyltransferase RlmE family. TRM7 subfamily. As to quaternary structure, interacts with WDR6; the interaction is direct, and required for 2'-O-methylation of position 34 in substrate tRNAs.

The protein localises to the cytoplasm. Its subcellular location is the nucleus. The enzyme catalyses cytidine(32)/guanosine(34) in tRNA + 2 S-adenosyl-L-methionine = 2'-O-methylcytidine(32)/2'-O-methylguanosine(34) in tRNA + 2 S-adenosyl-L-homocysteine + 2 H(+). In terms of biological role, methylates the 2'-O-ribose of nucleotides at positions 32 and 34 of the tRNA anticodon loop of substrate tRNAs. Requisite for faithful cytoplasmic translation. Requires THADA for methylation of the cytidine at position 32 of the anticodon loop of substrate tRNAs. Requires WDR6 for methylation of the nucleotide at position 34 of the anticodon loop of substrate tRNAs. Promotes translation efficiency of the UUU codon. Plays a role in neurogenesis. Required for expression of genes involved in neurogenesis and mitochondrial translation and energy generation. Requisite for RNA-mediated gene silencing. May modify position 32 in tRNA(Arg(ACG)), tRNA(Gln(CUG)), tRNA(Leu(UAA)), tRNA(Leu(UAG)), tRNA(Leu(AAG)), tRNA(Leu(CAG)), tRNA(Phe(GAA)), tRNA(Trp(CCA)) and tRNA(Val(AAC)), and position 34 in tRNA(Phe(GAA)), tRNA(Leu(CAA)), tRNA(Leu(UAA)), tRNA(Sec(UCA)), and tRNA(Trp(CCA)). The polypeptide is tRNA (cytidine(32)/guanosine(34)-2'-O)-methyltransferase (Mus musculus (Mouse)).